The sequence spans 216 residues: Probable csgAB operon transcriptional regulatory protein (216 aa).

In terms of domain architecture, HTH luxR-type spans 149–214 (NSTESALLTH…QAVSWANDNL (66 aa)). Residues 173–192 (NNEIARSLFISENTVKTHLY) constitute a DNA-binding region (H-T-H motif).

In terms of biological role, the master regulator for adhesive curli fimbriae expression; necessary for transcription of the csgAB operon. Plays a positive role in biofilm formation. This Salmonella typhimurium (strain LT2 / SGSC1412 / ATCC 700720) protein is Probable csgAB operon transcriptional regulatory protein.